A 261-amino-acid polypeptide reads, in one-letter code: Cell division protein B (261 aa).

A winged-helix-like fold region spans residues 213–261 (SEDMILNYIKTTGGFIDVDYIAKNFDVSKDEVFNVLRRLEEKGLIVLEG).

Interacts with CdvA. Interacts with CdvC.

It is found in the cytoplasm. The protein resides in the nucleoid. In terms of biological role, part of a cell division machinery. The CdvA, CdvB and CdvC proteins polymerize between segregating nucleoids and persist throughout cell division, forming a successively smaller structure during constriction. The chain is Cell division protein B from Sulfolobus acidocaldarius (strain ATCC 33909 / DSM 639 / JCM 8929 / NBRC 15157 / NCIMB 11770).